A 789-amino-acid chain; its full sequence is MSAQTSPAEKGLNPGLMCQESYACSGTDEAIFECDECCSLQCLRCEEELHRQERLRNHERIRLKPGHVPYCDLCKGLSGHLPGVRQRAIVRCQTCKINLCLECQKRTHSGGNKRRHPVTVYNVSNLQESLEAEEMDEETKRKKMTEKVVSFLLVDENEEIQVTNEEDFIRKLDCKPDQHLKVASIFGNTGDGKSHTLNHTFFYGREVFKTSPTQESCTVGVWAAYDPVHKVAVIDTEGLLGATVNLSQRTRLLLKVLAISDLVIYRTHADRLHNDLFKFLGDASEAYLKHYTKELKATTARCGLDVPLSTLGPAVIIFHETVHTQLLGSDHPSEVPEKLIQDRFRKLGRFPEAFSSIHYKGTRTYNPPTDFSGLRRALEQLLENNTTRSPRHPGVIFKALKALSDRFSGEIPDDQMAHSSFFPDEYFTCSSLCLSCGVGCKNSMNHGKEGVPHEAKSRCRYSHQYDNRVYTCKACYEGGEEVSVVPKTSASTDSPWMGLAKYAWSGYVIECPNCGVVYRSRQYWFGNQDPVDTVVRTEIVHVWPGTDGFLKDNNNAAQRLLDGMNFMAQSVSELSLGPTKAVTSWLTDQIAPAYWRPNSQILSCNKCATSFKDNDTKHHCRACGEGFCDSCSSKTRPVPERGWGPAPVRVCDNCYEARNVQLAVTEAQVDDEGGTLIARKVGEAVQNTLGAVVTAIDIPLGLVKDAARPAYWVPDHEILHCHNCRKEFSIKLSKHHCRACGQGFCDECSHDRRAVPSRGWDHPVRVCFNCNKKPAWTSLSVMTGKGPLC.

Residues 416 to 788 (MAHSSFFPDE…LSVMTGKGPL (373 aa)) are required for localization in the lipid droplets. 2 FYVE-type zinc fingers span residues 598–659 (NSQI…EARN) and 715–775 (DHEI…KKPA). Positions 604, 607, 620, 623, 628, 631, 651, 654, 721, 724, 737, 740, 745, 748, 767, and 770 each coordinate Zn(2+).

As to quaternary structure, interacts with RAB18 (in GTP-bound form). Interacts with BSCL2 in a RAB18-dependent manner. Interacts with ZW10.

It localises to the golgi apparatus. The protein localises to the golgi stack. It is found in the endoplasmic reticulum. Its subcellular location is the preautophagosomal structure. The protein resides in the lipid droplet. It localises to the mitochondrion. In terms of biological role, plays a role in the formation of lipid droplets (LDs) which are storage organelles at the center of lipid and energy homeostasis. Regulates the morphology, size and distribution of LDs. Mediates the formation of endoplasmic reticulum-lipid droplets (ER-LD) contact sites by forming a complex with RAB18 and ZW10. Binds to phosphatidylinositol 3-phosphate (PtdIns3P) through FYVE-type zinc finger. This Pongo abelii (Sumatran orangutan) protein is Zinc finger FYVE domain-containing protein 1 (ZFYVE1).